The following is a 239-amino-acid chain: MIELIPAIDIIDGKCVRLSQGDYNTQKVYNENPVEVAKEFEAHGIHRLHIVDLDGAVSRHVVNYRVLDQIASRTSLVIDFGGGIKTDEDLVIAFDNGAQMVTLGSVAVKNPGLFKKWLEQYGNEKIILGADVKENKISVNGWKEESQQQLIPFLKDYTKEGVFKVLCTDISRDGMLQGPSVELYQQILKEFPNMHLIASGGVSCIQDIIDLEIAKVPAVVFGKALYEGKITLKDLNRFM.

The active-site Proton acceptor is the Asp9. The active-site Proton donor is the Asp131.

Belongs to the HisA/HisF family.

The protein localises to the cytoplasm. The catalysed reaction is 1-(5-phospho-beta-D-ribosyl)-5-[(5-phospho-beta-D-ribosylamino)methylideneamino]imidazole-4-carboxamide = 5-[(5-phospho-1-deoxy-D-ribulos-1-ylimino)methylamino]-1-(5-phospho-beta-D-ribosyl)imidazole-4-carboxamide. Its pathway is amino-acid biosynthesis; L-histidine biosynthesis; L-histidine from 5-phospho-alpha-D-ribose 1-diphosphate: step 4/9. This Phocaeicola vulgatus (strain ATCC 8482 / DSM 1447 / JCM 5826 / CCUG 4940 / NBRC 14291 / NCTC 11154) (Bacteroides vulgatus) protein is 1-(5-phosphoribosyl)-5-[(5-phosphoribosylamino)methylideneamino] imidazole-4-carboxamide isomerase.